A 377-amino-acid chain; its full sequence is NADH dehydrogenase [ubiquinone] 1 alpha subcomplex subunit 9, mitochondrial (377 aa).

The transit peptide at 1–35 (MAAAVRFQVVRALPMSRPAISAAATSVFCSSSHRQ) directs the protein to the mitochondrion. K175 carries the N6-succinyllysine modification. K189 and K370 each carry N6-acetyllysine.

It belongs to the complex I NDUFA9 subunit family. As to quaternary structure, complex I is composed of 45 different subunits. This a component of the hydrophobic protein fraction. Interacts with BLOC1S1. Interacts with SLC2A4. Interacts with CLOCK. Interacts with RAB5IF. Requires FAD as cofactor. Post-translationally, acetylated on lysine residues. BLOC1S1 is required for acetylation. Acetylated by CLOCK in a circadian manner. Expressed by the principal cells of the epididymis. Detected in flagella of epididymal sperm (at protein level).

It localises to the mitochondrion matrix. Functionally, accessory subunit of the mitochondrial membrane respiratory chain NADH dehydrogenase (Complex I), that is believed not to be involved in catalysis. Complex I functions in the transfer of electrons from NADH to the respiratory chain. The immediate electron acceptor for the enzyme is believed to be ubiquinone. In Rattus norvegicus (Rat), this protein is NADH dehydrogenase [ubiquinone] 1 alpha subcomplex subunit 9, mitochondrial.